We begin with the raw amino-acid sequence, 630 residues long: Scarecrow-like protein 34 (630 aa).

The 389-residue stretch at 240-628 (KKKKSQVVDF…RTLYASSCWV (389 aa)) folds into the GRAS domain. The interval 247 to 312 (VDFRTLLTHC…GSTGPMIQTY (66 aa)) is leucine repeat I (LRI). The segment at 331-396 (YRVYLSSSPF…DVPRKLRITG (66 aa)) is VHIID. The short motif at 362 to 366 (LHIVD) is the VHIID element. The segment at 412-444 (ETGRRLAEYCKRFNVPFEYKAIASQNWETIRIE) is leucine repeat II (LRII). Residues 454–549 (LAVNAGLRLK…REFYGREAMN (96 aa)) form a PFYRE region. Residues 552–628 (ACEEADRVER…RTLYASSCWV (77 aa)) are SAW.

Belongs to the GRAS family.

The protein localises to the nucleus. Functionally, probable transcription factor involved in plant development. This Arabidopsis thaliana (Mouse-ear cress) protein is Scarecrow-like protein 34 (SCL34).